The sequence spans 405 residues: Acetate kinase (405 aa).

Asparagine 7 contributes to the Mg(2+) binding site. Position 14 (lysine 14) interacts with ATP. Residue arginine 99 coordinates substrate. Aspartate 156 (proton donor/acceptor) is an active-site residue. ATP-binding positions include histidine 215–glycine 219, aspartate 290–arginine 292, and glycine 338–histidine 342. Glutamate 391 is a Mg(2+) binding site.

This sequence belongs to the acetokinase family. In terms of assembly, homodimer. The cofactor is Mg(2+). Mn(2+) serves as cofactor.

It localises to the cytoplasm. The catalysed reaction is acetate + ATP = acetyl phosphate + ADP. It participates in metabolic intermediate biosynthesis; acetyl-CoA biosynthesis; acetyl-CoA from acetate: step 1/2. Catalyzes the formation of acetyl phosphate from acetate and ATP. Can also catalyze the reverse reaction. The protein is Acetate kinase of Nostoc punctiforme (strain ATCC 29133 / PCC 73102).